The following is a 192-amino-acid chain: Immunoglobulin superfamily member 23 (192 aa).

Residues 1-26 (MRAKPQSPLPRNPVPAWSPPTTTTDP) are disordered. Residues 7–18 (SPLPRNPVPAWS) are compositionally biased toward pro residues. An Ig-like domain is found at 20 to 128 (PTTTTDPMLE…QLVSEPVTIS (109 aa)). A glycan (N-linked (GlcNAc...) asparagine) is linked at Asn64. Residues 158–178 (LLAAGILGAGALIAGMCFIII) traverse the membrane as a helical segment.

Expressed in bone and small intestine. Highly expressed in osteoclasts, and low expressed in osteoblasts and peripheral blood mononuclear cells (PBMCs).

Its subcellular location is the cell membrane. Functionally, may be involved in osteoclast differentiation. The polypeptide is Immunoglobulin superfamily member 23 (Homo sapiens (Human)).